Consider the following 504-residue polypeptide: Mitochondrial-processing peptidase subunit alpha (504 aa).

It belongs to the peptidase M16 family. As to quaternary structure, heterodimer of alpha and beta subunits, forming the mitochondrial processing protease (MPP) in which subunit alpha is involved in substrate recognition and binding and subunit beta is the catalytic subunit.

The protein localises to the mitochondrion inner membrane. The catalysed reaction is a quinol + 2 Fe(III)-[cytochrome c](out) = a quinone + 2 Fe(II)-[cytochrome c](out) + 2 H(+)(out). Functionally, substrate recognition and binding subunit of the essential mitochondrial processing protease (MPP), which cleaves the mitochondrial sequence off newly imported precursors proteins. In terms of biological role, this is a component of the ubiquinol-cytochrome c reductase complex (complex III or cytochrome b-c1 complex), which is part of the mitochondrial respiratory chain. Mediates formation of the complex between cytochromes c and c1. The sequence is that of Mitochondrial-processing peptidase subunit alpha (MPP) from Solanum tuberosum (Potato).